A 638-amino-acid chain; its full sequence is Sodium- and chloride-dependent glycine transporter 1 (638 aa).

Positions Met1–Leu30 are disordered. The Cytoplasmic portion of the chain corresponds to Met1 to Glu40. 3 consecutive transmembrane segments (helical) span residues Phe41–Leu61, Gly68–Met88, and Val120–Phe140. The Extracellular segment spans residues Ser141–Glu217. 4 N-linked (GlcNAc...) asparagine glycosylation sites follow: Asn169, Asn172, Asn182, and Asn188. Transmembrane regions (helical) follow at residues Val218 to Ile238, Val247 to Val267, Val292 to Ile312, Ser339 to Val359, Leu382 to Leu402, Val438 to Leu458, Tyr462 to Ile482, Leu502 to Phe522, and Val542 to Phe562. Residues Gln563–Ile638 lie on the Cytoplasmic side of the membrane. Phosphothreonine is present on Thr603. Ser605 and Ser630 each carry phosphoserine. The tract at residues Ser627 to Ile638 is essential for interaction with EXOC1.

Belongs to the sodium:neurotransmitter symporter (SNF) (TC 2.A.22) family. SLC6A9 subfamily. As to quaternary structure, interacts with EXOC1; interaction increases the transporter capacity of SLC6A9 probably by promoting its insertion into the cell membrane. Interacts with EXOC3 and EXOC4. In terms of tissue distribution, found only in the white matter of the CNS. Found in the gray matter of CNS as well as in macrophages and mast cells in peripheral tissues.

The protein localises to the cell membrane. The enzyme catalyses glycine(out) + chloride(out) + 2 Na(+)(out) = glycine(in) + chloride(in) + 2 Na(+)(in). Inhibited by sarcosine. Sodium- and chloride-dependent glycine transporter. Essential for regulating glycine concentrations at inhibitory glycinergic synapses. The polypeptide is Sodium- and chloride-dependent glycine transporter 1 (Slc6a9) (Rattus norvegicus (Rat)).